We begin with the raw amino-acid sequence, 601 residues long: Probable translation initiation factor IF-2 (601 aa).

One can recognise a tr-type G domain in the interval 10-227; the sequence is LRAPIVVVLG…VLAGLAQRYL (218 aa). The tract at residues 19–26 is G1; that stretch reads GHVDAGKT. Position 19-26 (19-26) interacts with GTP; sequence GHVDAGKT. The tract at residues 44 to 48 is G2; sequence TMTQH. The segment at 83–86 is G3; that stretch reads DTPG. Residues 83-87 and 137-140 each bind GTP; these read DTPGH and NKID. The interval 137–140 is G4; the sequence is NKID. Residues 205-207 form a G5 region; the sequence is SAV.

The protein belongs to the TRAFAC class translation factor GTPase superfamily. Classic translation factor GTPase family. IF-2 subfamily.

Its function is as follows. Function in general translation initiation by promoting the binding of the formylmethionine-tRNA to ribosomes. Seems to function along with eIF-2. This chain is Probable translation initiation factor IF-2, found in Thermofilum pendens (strain DSM 2475 / Hrk 5).